A 2208-amino-acid polypeptide reads, in one-letter code: Glutamate synthase 1 [NADH], chloroplastic (2208 aa).

The N-terminal 49 residues, 1–49 (MSAASSSSVLHLRTNQQLLSLRSLKNSTSVASQLAVTSGVSRRRSCTAR), are a transit peptide targeting the chloroplast. C117 (nucleophile) is an active-site residue. The region spanning 117–521 (CGVGFVAELS…PGMMLLVDFE (405 aa)) is the Glutamine amidotransferase type-2 domain. Residues 1040 to 1067 (GKSNTGEGGELPSRMEPLADGSRNPKRS) form a disordered region. 1211–1268 (LAETHQTLVANDLRGRTVLQTDGQLKTGRDVAVAALLGAEEFGFSTAPLITLGCIMMR) contacts FMN. Positions 1264, 1270, and 1275 each coordinate [3Fe-4S] cluster. Residue 1995-2009 (GGGDTGTDCIGTSIR) participates in NAD(+) binding.

This sequence belongs to the glutamate synthase family. In terms of assembly, monomer. The cofactor is [3Fe-4S] cluster. FAD is required as a cofactor. It depends on FMN as a cofactor. Highly expressed in roots and at low levels in leaves.

Its subcellular location is the plastid. It is found in the chloroplast. The catalysed reaction is 2 L-glutamate + NAD(+) = L-glutamine + 2-oxoglutarate + NADH + H(+). The protein operates within amino-acid biosynthesis; L-glutamate biosynthesis via GLT pathway; L-glutamate from 2-oxoglutarate and L-glutamine (NAD(+) route): step 1/1. Its pathway is energy metabolism; nitrogen metabolism. Its function is as follows. Involved in glutamate biosynthesis. Required for non-photorespiratory ammonium assimilation. Probably involved in primary ammonium assimilation in roots. This chain is Glutamate synthase 1 [NADH], chloroplastic (GLT1), found in Arabidopsis thaliana (Mouse-ear cress).